Here is a 417-residue protein sequence, read N- to C-terminus: NADH-quinone oxidoreductase subunit D (417 aa).

Belongs to the complex I 49 kDa subunit family. NDH-1 is composed of 14 different subunits. Subunits NuoB, C, D, E, F, and G constitute the peripheral sector of the complex.

It localises to the cell inner membrane. It catalyses the reaction a quinone + NADH + 5 H(+)(in) = a quinol + NAD(+) + 4 H(+)(out). Functionally, NDH-1 shuttles electrons from NADH, via FMN and iron-sulfur (Fe-S) centers, to quinones in the respiratory chain. The immediate electron acceptor for the enzyme in this species is believed to be ubiquinone. Couples the redox reaction to proton translocation (for every two electrons transferred, four hydrogen ions are translocated across the cytoplasmic membrane), and thus conserves the redox energy in a proton gradient. The protein is NADH-quinone oxidoreductase subunit D of Halorhodospira halophila (strain DSM 244 / SL1) (Ectothiorhodospira halophila (strain DSM 244 / SL1)).